The following is a 255-amino-acid chain: 5-oxoprolinase subunit A (255 aa).

Belongs to the LamB/PxpA family. In terms of assembly, forms a complex composed of PxpA, PxpB and PxpC.

The catalysed reaction is 5-oxo-L-proline + ATP + 2 H2O = L-glutamate + ADP + phosphate + H(+). Catalyzes the cleavage of 5-oxoproline to form L-glutamate coupled to the hydrolysis of ATP to ADP and inorganic phosphate. This Pyrococcus abyssi (strain GE5 / Orsay) protein is 5-oxoprolinase subunit A.